We begin with the raw amino-acid sequence, 321 residues long: Gap junction delta-2 protein (321 aa).

At Met-1 to Ser-19 the chain is on the cytoplasmic side. A helical membrane pass occupies residues Thr-20–Gly-42. Residues Glu-43–His-75 are Extracellular-facing. The helical transmembrane segment at Ile-76–Val-98 threads the bilayer. Residues His-99 to Arg-197 lie on the Cytoplasmic side of the membrane. A disordered region spans residues Arg-118–Glu-141. Residues Gly-125–Gly-137 show a composition bias toward gly residues. The helical transmembrane segment at Phe-198–Leu-220 threads the bilayer. Residues Tyr-221 to Val-252 lie on the Extracellular side of the membrane. Residues Phe-253–Leu-275 traverse the membrane as a helical segment. Over Gly-276–Val-321 the chain is Cytoplasmic.

It belongs to the connexin family. Delta-type subfamily. As to quaternary structure, a connexon is composed of a hexamer of connexins. As to expression, highly expressed in neurons.

It is found in the cell membrane. The protein localises to the cell junction. It localises to the gap junction. One gap junction consists of a cluster of closely packed pairs of transmembrane channels, the connexons, through which materials of low MW diffuse from one cell to a neighboring cell. This Homo sapiens (Human) protein is Gap junction delta-2 protein (GJD2).